Reading from the N-terminus, the 336-residue chain is MSAPLRVLVTGAAGQIGYSIVIRIADGTVFGKEQPVELVLLDVPQCSNILEGVVFELQDCALPTLFSVVAVTDEKSAFTGIDYAFLVGAMPRREGMERKDLLAANVKIFKSQGKALAEYAKPTTKVIVVGNPANTNAFIAAKYAAGKIPAKNFSAMTRLDHNRALAQLALKTGTTIGNVKNVIIWGNHSGTQFPDVTHATVNKNGTETDAYAAVGDNAFLQGPFIATVQKRGGVIIEKRKLSSAMSAAKAACDHIHDWHFGTKAGQFVSMAVPSDGSYGIPQGLIFSFPVTIEGGEWKIVQGLSFDDFAKGKIAATTKELEEERDDALKACDDANI.

NAD(+) contacts are provided by residues glycine 11–glycine 17 and aspartate 42. Substrate-binding residues include arginine 92 and arginine 98. Residues asparagine 105, glutamine 112, and valine 129–asparagine 131 each bind NAD(+). Substrate-binding residues include asparagine 131 and arginine 163. Histidine 188 functions as the Proton acceptor in the catalytic mechanism.

This sequence belongs to the LDH/MDH superfamily. MDH type 2 family. As to quaternary structure, homodimer.

It localises to the cytoplasm. It carries out the reaction (S)-malate + NAD(+) = oxaloacetate + NADH + H(+). In terms of biological role, catalyzes the reversible conversion of (S)-malate to oxaloacetate in the cytoplasm where oxaloacetate is used for gluconeogenesis. This Caenorhabditis elegans protein is Malate dehydrogenase, cytoplasmic.